A 68-amino-acid chain; its full sequence is Large ribosomal subunit protein bL35 (68 aa).

Composition is skewed to basic residues over residues 1-15 (MPKMKSHSGTKKRFK) and 23-38 (TARKAGKRHLNEHKSS). The segment at 1 to 38 (MPKMKSHSGTKKRFKVTGSGKVTARKAGKRHLNEHKSS) is disordered.

It belongs to the bacterial ribosomal protein bL35 family.

This Cutibacterium acnes (strain DSM 16379 / KPA171202) (Propionibacterium acnes) protein is Large ribosomal subunit protein bL35.